Reading from the N-terminus, the 203-residue chain is Cupin-domain-containing oxidoreductase fogC (203 aa).

The interval 105–171 (DFAPGVESPL…GNGTLPGRML (67 aa)) is cupin-like domain.

Belongs to the virC family.

It functions in the pathway secondary metabolite biosynthesis. Cupin-domain-containing oxidoreductase; part of the gene cluster that mediates the biosynthesis of flavoglaucin and congeners (including aspergin, dihydroauroglaucin and auroglaucin), prenylated salicylaldehyde derivatives carrying a saturated or an unsaturated C-7 side chain. The PKS fogA releases the carboxylic acid (8E,10E,12E)-3,5,7-trihydroxytetradeca-8,10,12-trienoic acid as its product, as well as derivatives with one and two double bonds. FogA is indeed able to reduce the initial triketide, thus being at least partially responsible for the differently saturated heptyl side chains of flavoglaucin congeners. The oxidoreductases fogB, fogC and fogD modify the nascent polyketide in fogA-bound form and, together, fogA, fogB, fogC and fogD are necessary for the formation of the aromatic core and the cyclized PKS products are released as salicyl alcohols. In particular, fogB is responsible for oxidation of a hydroxyl group or reduction of remaining double bond(s) at the C-7 residue whereas fogD is probably involved in the reductive release of the modified PKS products. The cytochrome P450 monooxygenase fogE is then responsible for the hydroxylation at C-3 of the benzene ring. The fogE products are substrates of the prenyltransferase fogH and the prenylated benzyl alcohols are subsequently oxidized by the fogF to produce the final aryl aldehydes flavoglaucin and congeners. The short-chain dehydrogenase fogG does not seem to be involved in the biosynthesis of the prenylated salicylaldehyde derivatives. This chain is Cupin-domain-containing oxidoreductase fogC, found in Aspergillus ruber (strain CBS 135680).